The chain runs to 188 residues: Ribose 1,5-bisphosphate phosphokinase PhnN (188 aa).

Belongs to the ribose 1,5-bisphosphokinase family.

It catalyses the reaction alpha-D-ribose 1,5-bisphosphate + ATP = 5-phospho-alpha-D-ribose 1-diphosphate + ADP. It functions in the pathway metabolic intermediate biosynthesis; 5-phospho-alpha-D-ribose 1-diphosphate biosynthesis; 5-phospho-alpha-D-ribose 1-diphosphate from D-ribose 5-phosphate (route II): step 3/3. In terms of biological role, catalyzes the phosphorylation of ribose 1,5-bisphosphate to 5-phospho-D-ribosyl alpha-1-diphosphate (PRPP). This chain is Ribose 1,5-bisphosphate phosphokinase PhnN, found in Dickeya zeae (strain Ech586) (Dickeya dadantii (strain Ech586)).